The primary structure comprises 276 residues: Formamidopyrimidine-DNA glycosylase (276 aa).

Catalysis depends on Pro2, which acts as the Schiff-base intermediate with DNA. Glu3 (proton donor) is an active-site residue. Catalysis depends on Lys59, which acts as the Proton donor; for beta-elimination activity. DNA contacts are provided by His92, Arg111, and Lys155. The FPG-type zinc-finger motif lies at 239 to 273 (AVYGQTGAPCPRCGTAIEKIKVGGRGTHFCPTCQQ). Arg263 (proton donor; for delta-elimination activity) is an active-site residue.

It belongs to the FPG family. As to quaternary structure, monomer. Requires Zn(2+) as cofactor.

The enzyme catalyses Hydrolysis of DNA containing ring-opened 7-methylguanine residues, releasing 2,6-diamino-4-hydroxy-5-(N-methyl)formamidopyrimidine.. It catalyses the reaction 2'-deoxyribonucleotide-(2'-deoxyribose 5'-phosphate)-2'-deoxyribonucleotide-DNA = a 3'-end 2'-deoxyribonucleotide-(2,3-dehydro-2,3-deoxyribose 5'-phosphate)-DNA + a 5'-end 5'-phospho-2'-deoxyribonucleoside-DNA + H(+). Its function is as follows. Involved in base excision repair of DNA damaged by oxidation or by mutagenic agents. Acts as a DNA glycosylase that recognizes and removes damaged bases. Has a preference for oxidized purines, such as 7,8-dihydro-8-oxoguanine (8-oxoG). Has AP (apurinic/apyrimidinic) lyase activity and introduces nicks in the DNA strand. Cleaves the DNA backbone by beta-delta elimination to generate a single-strand break at the site of the removed base with both 3'- and 5'-phosphates. In Exiguobacterium sibiricum (strain DSM 17290 / CCUG 55495 / CIP 109462 / JCM 13490 / 255-15), this protein is Formamidopyrimidine-DNA glycosylase.